Reading from the N-terminus, the 186-residue chain is Ribosome-recycling factor (186 aa).

The protein belongs to the RRF family.

It is found in the cytoplasm. Its function is as follows. Responsible for the release of ribosomes from messenger RNA at the termination of protein biosynthesis. May increase the efficiency of translation by recycling ribosomes from one round of translation to another. This chain is Ribosome-recycling factor, found in Rickettsia rickettsii (strain Iowa).